The primary structure comprises 709 residues: Phosphomethylpyrimidine synthase (709 aa).

A compositionally biased stretch (polar residues) spans 1–13; it reads MNIRSNPDTTLPA. Disordered regions lie at residues 1–21 and 125–168; these read MNIR…PLPS and DAPA…GREQ. Substrate contacts are provided by residues N274, M303, Y332, H368, 388 to 390, 429 to 432, and E468; these read SRG and DGLR. H472 contacts Zn(2+). Y495 contacts substrate. A Zn(2+)-binding site is contributed by H536. [4Fe-4S] cluster is bound by residues C616, C619, and C624.

It belongs to the ThiC family. As to quaternary structure, homodimer. [4Fe-4S] cluster is required as a cofactor.

The catalysed reaction is 5-amino-1-(5-phospho-beta-D-ribosyl)imidazole + S-adenosyl-L-methionine = 4-amino-2-methyl-5-(phosphooxymethyl)pyrimidine + CO + 5'-deoxyadenosine + formate + L-methionine + 3 H(+). It functions in the pathway cofactor biosynthesis; thiamine diphosphate biosynthesis. In terms of biological role, catalyzes the synthesis of the hydroxymethylpyrimidine phosphate (HMP-P) moiety of thiamine from aminoimidazole ribotide (AIR) in a radical S-adenosyl-L-methionine (SAM)-dependent reaction. The protein is Phosphomethylpyrimidine synthase of Rhodopseudomonas palustris (strain BisB18).